A 104-amino-acid chain; its full sequence is Protein EPIDERMAL PATTERNING FACTOR 1 (104 aa).

Positions 1-20 are cleaved as a signal peptide; sequence MKSLLLLAFFLSFFFGSLLA. 4 disulfide bridges follow: cysteine 60–cysteine 94, cysteine 64–cysteine 70, cysteine 67–cysteine 96, and cysteine 79–cysteine 88. Asparagine 98 carries an N-linked (GlcNAc...) asparagine glycan.

Belongs to the plant cysteine rich small secretory peptide family. Epidermal patterning factor subfamily. Interacts with ERECTA and ERL1, but not with TMM. In terms of tissue distribution, expressed in shoots, but not in roots. Mostly localized in developing leaves, specifically in meristemoids, guard mother cells (GMCs), and young guard cells.

The protein localises to the secreted. Functionally, controls stomatal patterning. Regulates asymmetric cell division during guard cell differentiation. Mediates stomatal development inhibition. Not cleaved by the protease CRSP (AC Q9LNU1). MEPF1: mobile signal controlling stomatal development in a non-cell-autonomous manner. Uses ERL1 as major receptor. May act by competing with somatogen (AC Q9SV72) for the same receptor, TMM (AC Q9SSD1). This chain is Protein EPIDERMAL PATTERNING FACTOR 1, found in Arabidopsis thaliana (Mouse-ear cress).